We begin with the raw amino-acid sequence, 538 residues long: Cytochrome P450 monooxygenase claO (538 aa).

2 consecutive transmembrane segments (helical) span residues 7–27 and 222–242; these read IGAF…KLVG and INPS…PILL. C475 is a binding site for heme.

The protein belongs to the cytochrome P450 family. The cofactor is heme.

The protein resides in the membrane. The protein operates within secondary metabolite biosynthesis; terpenoid biosynthesis. Its function is as follows. Cytochrome P450 monooxygenase; part of the gene cluster that mediates the biosynthesis of clavilactone A, a meroterpenoid that features a unique benzo-fused ten-membered carbocyclic ring unit with an alpha,beta-epoxy-gamma-lactone moiety, forming an intriguing 10/5/3 tricyclic nested skeleton. Cytochrome P450 monooxygenases claO, claP, claQ, claU, and claW are close orthologs, suggesting that a redundant function or pseudogenes are present in the cla cluster. These monoxygenases are not involved in clavilactone A biosynthesis nor in its modification. ClaR, ClaS and ClaT are sufficient to produce clavilactone A. The biosynthesis begins with the prenyltransferase claS that transfers geranyl pyrophosphate (GPP) to hydroquinone to produces geranylhydroquinone. The cytochrome P450 monooxygenase claR then catalyzes the diradical coupling reaction between the intramolecular hydroquinone and allyl moieties to form the benzo-fused ten-membered carbocyclic ring unit of wigantol. Finally the cytochrome P450 monooxygenase claT exquisitely and stereoselectively assembles the alpha,beta-epoxy-gamma-lactone moiety, producing clavilactone A via arnebinol A. The sequence is that of Cytochrome P450 monooxygenase claO from Ampulloclitocybe clavipes (Club foot).